We begin with the raw amino-acid sequence, 141 residues long: ATP synthase epsilon chain (141 aa).

Belongs to the ATPase epsilon chain family. In terms of assembly, F-type ATPases have 2 components, CF(1) - the catalytic core - and CF(0) - the membrane proton channel. CF(1) has five subunits: alpha(3), beta(3), gamma(1), delta(1), epsilon(1). CF(0) has three main subunits: a, b and c.

The protein resides in the cell membrane. In terms of biological role, produces ATP from ADP in the presence of a proton gradient across the membrane. This chain is ATP synthase epsilon chain (atpC), found in Mycoplasmopsis pulmonis (strain UAB CTIP) (Mycoplasma pulmonis).